The following is a 79-amino-acid chain: uncharacterized protein (79 aa).

The interval 51–79 (PAQFPKVQRPPTLLGGKNTSTQTTLHPVI) is disordered. The segment covering 67 to 79 (KNTSTQTTLHPVI) has biased composition (polar residues).

This is an uncharacterized protein from Homo sapiens (Human).